A 166-amino-acid chain; its full sequence is Testis-expressed protein 51 (166 aa).

The signal sequence occupies residues 1–15; the sequence is MLPLLIICLLPAIEG. The chain crosses the membrane as a helical span at residues 138–154; that stretch reads SLWAVSLSSALLLAIAG.

The protein resides in the membrane. The polypeptide is Testis-expressed protein 51 (Homo sapiens (Human)).